An 832-amino-acid polypeptide reads, in one-letter code: Protein P (832 aa).

The interval 1-177 (MPLSYQHFRR…FCGSPYSWEQ (177 aa)) is terminal protein domain (TP). The segment at 178 to 335 (DLQHGAESIH…YCLSLIVNLL (158 aa)) is spacer. 2 disordered regions span residues 186 to 218 (IHQQ…QSQQ) and 239 to 266 (TARR…SCLY). Residues 336 to 679 (EDWGPCDEYG…YLNLYPVARQ (344 aa)) form a polymerase/reverse transcriptase domain (RT) region. In terms of domain architecture, Reverse transcriptase spans 346 to 589 (EHHIRIPRTP…YSLHFMGYVI (244 aa)). Residues aspartate 418, aspartate 540, and aspartate 541 each coordinate Mg(2+).

It belongs to the hepadnaviridae P protein family.

The enzyme catalyses DNA(n) + a 2'-deoxyribonucleoside 5'-triphosphate = DNA(n+1) + diphosphate. It carries out the reaction Endonucleolytic cleavage to 5'-phosphomonoester.. Activated by host HSP70 and HSP40 in vitro to be able to bind the epsilon loop of the pgRNA. Because deletion of the RNase H region renders the protein partly chaperone-independent, the chaperones may be needed indirectly to relieve occlusion of the RNA-binding site by this domain. Inhibited by several reverse-transcriptase inhibitors: Lamivudine, Adefovir and Entecavir. Functionally, multifunctional enzyme that converts the viral RNA genome into dsDNA in viral cytoplasmic capsids. This enzyme displays a DNA polymerase activity that can copy either DNA or RNA templates, and a ribonuclease H (RNase H) activity that cleaves the RNA strand of RNA-DNA heteroduplexes in a partially processive 3'- to 5'-endonucleasic mode. Neo-synthesized pregenomic RNA (pgRNA) are encapsidated together with the P protein, and reverse-transcribed inside the nucleocapsid. Initiation of reverse-transcription occurs first by binding the epsilon loop on the pgRNA genome, and is initiated by protein priming, thereby the 5'-end of (-)DNA is covalently linked to P protein. Partial (+)DNA is synthesized from the (-)DNA template and generates the relaxed circular DNA (RC-DNA) genome. After budding and infection, the RC-DNA migrates in the nucleus, and is converted into a plasmid-like covalently closed circular DNA (cccDNA). The activity of P protein does not seem to be necessary for cccDNA generation, and is presumably released from (+)DNA by host nuclear DNA repair machinery. The chain is Protein P from Homo sapiens (Human).